The sequence spans 639 residues: 1-deoxy-D-xylulose-5-phosphate synthase (639 aa).

Thiamine diphosphate-binding positions include histidine 79 and 120–122 (AHS). Residue aspartate 151 coordinates Mg(2+). Thiamine diphosphate contacts are provided by residues 152–153 (GA), asparagine 180, tyrosine 289, and glutamate 371. Residue asparagine 180 participates in Mg(2+) binding.

It belongs to the transketolase family. DXPS subfamily. Homodimer. The cofactor is Mg(2+). Thiamine diphosphate serves as cofactor.

It catalyses the reaction D-glyceraldehyde 3-phosphate + pyruvate + H(+) = 1-deoxy-D-xylulose 5-phosphate + CO2. Its pathway is metabolic intermediate biosynthesis; 1-deoxy-D-xylulose 5-phosphate biosynthesis; 1-deoxy-D-xylulose 5-phosphate from D-glyceraldehyde 3-phosphate and pyruvate: step 1/1. Its function is as follows. Catalyzes the acyloin condensation reaction between C atoms 2 and 3 of pyruvate and glyceraldehyde 3-phosphate to yield 1-deoxy-D-xylulose-5-phosphate (DXP). In Allorhizobium ampelinum (strain ATCC BAA-846 / DSM 112012 / S4) (Agrobacterium vitis (strain S4)), this protein is 1-deoxy-D-xylulose-5-phosphate synthase.